A 74-amino-acid polypeptide reads, in one-letter code: Large ribosomal subunit protein bL31 (74 aa).

Zn(2+)-binding residues include C17, C19, C38, and C41.

Belongs to the bacterial ribosomal protein bL31 family. Type A subfamily. Part of the 50S ribosomal subunit. Zn(2+) is required as a cofactor.

Binds the 23S rRNA. This Gloeobacter violaceus (strain ATCC 29082 / PCC 7421) protein is Large ribosomal subunit protein bL31.